We begin with the raw amino-acid sequence, 295 residues long: Nucleotide-binding protein EF_0766 (295 aa).

ATP is bound at residue 12–19 (GMSGAGKT). 62–65 (DLRS) lines the GTP pocket.

The protein belongs to the RapZ-like family.

Its function is as follows. Displays ATPase and GTPase activities. The sequence is that of Nucleotide-binding protein EF_0766 from Enterococcus faecalis (strain ATCC 700802 / V583).